The chain runs to 149 residues: uncharacterized protein (149 aa).

This is an uncharacterized protein from Aquifex aeolicus (strain VF5).